Reading from the N-terminus, the 549-residue chain is CTP synthase (549 aa).

Residues methionine 1–leucine 266 are amidoligase domain. Serine 14 is a CTP binding site. Serine 14 contributes to the UTP binding site. ATP is bound by residues serine 15–leucine 20 and aspartate 72. Positions 72 and 140 each coordinate Mg(2+). Residues aspartate 147 to glutamate 149, lysine 187 to glutamine 192, and lysine 223 contribute to the CTP site. Residues lysine 187–glutamine 192 and lysine 223 each bind UTP. Lysine 239 to valine 241 contacts ATP. The Glutamine amidotransferase type-1 domain occupies serine 291–proline 533. Residue glycine 353 participates in L-glutamine binding. Cysteine 380 acts as the Nucleophile; for glutamine hydrolysis in catalysis. L-glutamine contacts are provided by residues leucine 381–glutamine 384, glutamate 404, and arginine 461. Active-site residues include histidine 506 and glutamate 508.

The protein belongs to the CTP synthase family. In terms of assembly, homotetramer.

The catalysed reaction is UTP + L-glutamine + ATP + H2O = CTP + L-glutamate + ADP + phosphate + 2 H(+). It carries out the reaction L-glutamine + H2O = L-glutamate + NH4(+). The enzyme catalyses UTP + NH4(+) + ATP = CTP + ADP + phosphate + 2 H(+). It participates in pyrimidine metabolism; CTP biosynthesis via de novo pathway; CTP from UDP: step 2/2. With respect to regulation, allosterically activated by GTP, when glutamine is the substrate; GTP has no effect on the reaction when ammonia is the substrate. The allosteric effector GTP functions by stabilizing the protein conformation that binds the tetrahedral intermediate(s) formed during glutamine hydrolysis. Inhibited by the product CTP, via allosteric rather than competitive inhibition. Its function is as follows. Catalyzes the ATP-dependent amination of UTP to CTP with either L-glutamine or ammonia as the source of nitrogen. Regulates intracellular CTP levels through interactions with the four ribonucleotide triphosphates. This Acidobacterium capsulatum (strain ATCC 51196 / DSM 11244 / BCRC 80197 / JCM 7670 / NBRC 15755 / NCIMB 13165 / 161) protein is CTP synthase.